A 388-amino-acid chain; its full sequence is MACYSPRCDSPYPYADWDDCESVSSLGSFGCDYDHHEEASFQDPLAVGDDDVFEEPERVHGPIVDICKVDRMSEEEERMAIATRKAKEVAKELSETMSGKLRWLSDFTCDKPGPKRRKKKGLSMVDYPTLGSEAPAGSRIKMSKIGKGCTLVMASGGTRVEGSHPLVREFNGEKPPKNVGRKSGPAWFGYLSAKNATDKKTGSKQSDKEVEDDWTFVSKKGKGIQPEDAKPQGVKHQHAIRRDDRHRHGMRGTRYGAPNYGYRYQQQQCPVQGQQSRGQWQRRHCEGEGQWTQRRPAQQQQRPAQQQQRPAQQQQRPAQQQQRPAQQQQRPAQQQQRPAQQQQRPAQQPPQKPLRKRKPPPTNQRIVKPQKPKTPEPQPPQQDWFDSV.

Residues Lys-68–Thr-96 adopt a coiled-coil conformation. Positions Gly-162 to Val-388 are disordered. Composition is skewed to basic and acidic residues over residues Leu-166 to Pro-176 and Ala-196 to Lys-208. Positions Gly-233–Arg-251 are enriched in basic residues. Low complexity-rich tracts occupy residues Gln-265–Gln-279 and Gln-293–Ala-346.

This is an uncharacterized protein from Frog virus 3 (isolate Goorha) (FV-3).